The primary structure comprises 163 residues: Nucleotide-binding protein MAP_4063c (163 aa).

This sequence belongs to the YajQ family.

Functionally, nucleotide-binding protein. In Mycolicibacterium paratuberculosis (strain ATCC BAA-968 / K-10) (Mycobacterium paratuberculosis), this protein is Nucleotide-binding protein MAP_4063c.